Reading from the N-terminus, the 303-residue chain is Elongation factor Ts (303 aa).

The segment at 81–84 is involved in Mg(2+) ion dislocation from EF-Tu; it reads TDFV.

It belongs to the EF-Ts family.

Its subcellular location is the cytoplasm. In terms of biological role, associates with the EF-Tu.GDP complex and induces the exchange of GDP to GTP. It remains bound to the aminoacyl-tRNA.EF-Tu.GTP complex up to the GTP hydrolysis stage on the ribosome. The protein is Elongation factor Ts of Mesomycoplasma hyopneumoniae (strain J / ATCC 25934 / NCTC 10110) (Mycoplasma hyopneumoniae).